The following is a 114-amino-acid chain: uncharacterized protein (114 aa).

The segment at 90–114 (VESSQKRKPEESTIGMDAPKKMKRG) is disordered.

This is an uncharacterized protein from Caenorhabditis elegans.